The chain runs to 555 residues: Phosphomethylpyrimidine synthase (555 aa).

Substrate-binding positions include Asn-191, Met-220, Tyr-249, His-285, 305 to 307 (SRG), 346 to 349 (DGLR), and Glu-385. Position 389 (His-389) interacts with Zn(2+). Tyr-412 lines the substrate pocket. His-453 lines the Zn(2+) pocket. 3 residues coordinate [4Fe-4S] cluster: Cys-533, Cys-536, and Cys-541.

This sequence belongs to the ThiC family. Homodimer. [4Fe-4S] cluster serves as cofactor.

It carries out the reaction 5-amino-1-(5-phospho-beta-D-ribosyl)imidazole + S-adenosyl-L-methionine = 4-amino-2-methyl-5-(phosphooxymethyl)pyrimidine + CO + 5'-deoxyadenosine + formate + L-methionine + 3 H(+). The protein operates within cofactor biosynthesis; thiamine diphosphate biosynthesis. In terms of biological role, catalyzes the synthesis of the hydroxymethylpyrimidine phosphate (HMP-P) moiety of thiamine from aminoimidazole ribotide (AIR) in a radical S-adenosyl-L-methionine (SAM)-dependent reaction. The sequence is that of Phosphomethylpyrimidine synthase from Ehrlichia ruminantium (strain Gardel).